Here is a 279-residue protein sequence, read N- to C-terminus: MGCGPSQQKEDQSQSRIPSPRKGWEEGSKADVRVTSSKENCSPQTEAAWPKHTIDNAKSLDQQAQIGSLPGTIPENSPTPSKTSRRINSDPVANGLTNKPQLPESWERPKSSDILEELIVQGIIQSRSKVFRNGESYDVMVDTTEKPLRKPPARLKKLKVKKEVKDFTIQDIEEKMQAAEERRKTKKEEIRKRLRSDRLLPTANPSDEAEPPGRVEVPFTKGLPAVNTPALEKSDVQEGEPLKRKKSESDVAQMNRNYSCTGLELVESDMYYNQEDNIF.

Disordered regions lie at residues 1–110 and 178–254; these read MGCG…ERPK and AAEE…VAQM. G2 is lipidated: N-myristoyl glycine. Positions 22–32 are enriched in basic and acidic residues; the sequence is KGWEEGSKADV. Residues 34–45 are compositionally biased toward polar residues; it reads VTSSKENCSPQT. Positions 121–248 constitute an SLD domain; the sequence is QGIIQSRSKV…GEPLKRKKSE (128 aa). Composition is skewed to basic and acidic residues over residues 178–191 and 232–242; these read AAEE…EEIR and EKSDVQEGEPL.

This is Stathmin domain-containing protein 1 (Stmnd1) from Mus musculus (Mouse).